The chain runs to 313 residues: Homoserine O-succinyltransferase (313 aa).

Residue cysteine 142 is the Acyl-thioester intermediate of the active site. Substrate contacts are provided by lysine 163 and serine 192. The active-site Proton acceptor is histidine 235. The active site involves glutamate 237. Arginine 249 lines the substrate pocket.

This sequence belongs to the MetA family.

The protein resides in the cytoplasm. The enzyme catalyses L-homoserine + succinyl-CoA = O-succinyl-L-homoserine + CoA. It participates in amino-acid biosynthesis; L-methionine biosynthesis via de novo pathway; O-succinyl-L-homoserine from L-homoserine: step 1/1. Its function is as follows. Transfers a succinyl group from succinyl-CoA to L-homoserine, forming succinyl-L-homoserine. This chain is Homoserine O-succinyltransferase, found in Vibrio vulnificus (strain CMCP6).